Here is a 193-residue protein sequence, read N- to C-terminus: Ribosomal RNA small subunit methyltransferase G (193 aa).

Residues G61, L66, 112-113 (IE), and R126 each bind S-adenosyl-L-methionine.

It belongs to the methyltransferase superfamily. RNA methyltransferase RsmG family.

It localises to the cytoplasm. It carries out the reaction guanosine(527) in 16S rRNA + S-adenosyl-L-methionine = N(7)-methylguanosine(527) in 16S rRNA + S-adenosyl-L-homocysteine. Its function is as follows. Specifically methylates the N7 position of guanine in position 527 of 16S rRNA. This Paracoccus denitrificans (strain Pd 1222) protein is Ribosomal RNA small subunit methyltransferase G.